We begin with the raw amino-acid sequence, 126 residues long: Large ribosomal subunit protein bL12 (126 aa).

Belongs to the bacterial ribosomal protein bL12 family. As to quaternary structure, homodimer. Part of the ribosomal stalk of the 50S ribosomal subunit. Forms a multimeric L10(L12)X complex, where L10 forms an elongated spine to which 2 to 4 L12 dimers bind in a sequential fashion. Binds GTP-bound translation factors.

Forms part of the ribosomal stalk which helps the ribosome interact with GTP-bound translation factors. Is thus essential for accurate translation. This Legionella pneumophila (strain Paris) protein is Large ribosomal subunit protein bL12.